The following is a 320-amino-acid chain: Polycomb complex protein BMI-1-A (320 aa).

The RING-type zinc finger occupies 18 to 57 (CVLCGGYFIDATTIIECLHSFCKMCIVRYLETSKYCPICD). Residues 81-95 (KLVPGLFKNEMKRRR) carry the Nuclear localization signal motif. The tract at residues 234–320 (ITHPQEGLNN…ALNGSSTSSG (87 aa)) is disordered. A compositionally biased stretch (low complexity) spans 262-281 (VPSTSSPLPSPSTLVQPSQP). The segment covering 285-304 (HISSPINGTTMTSPNRQFNF) has biased composition (polar residues).

In terms of assembly, component of a PRC1-like complex. Homodimer. Interacts with cbx2.

The protein localises to the nucleus. In terms of biological role, component of a Polycomb group (PcG) multiprotein PRC1-like complex, a complex class required to maintain the transcriptionally repressive state of many genes, including Hox genes, throughout development. PcG PRC1 complex acts via chromatin remodeling and modification of histones; it mediates monoubiquitination of histone H2A 'Lys-119', rendering chromatin heritably changed in its expressibility. In the PRC1 complex, it is required to stimulate the E3 ubiquitin-protein ligase activity of rnf2. This is Polycomb complex protein BMI-1-A (bmi1a) from Danio rerio (Zebrafish).